We begin with the raw amino-acid sequence, 314 residues long: Olfactory receptor 1E2 (314 aa).

Topologically, residues 1-25 (MMGQNQTSISDFLLLGLPIQPEQQN) are extracellular. N5 is a glycosylation site (N-linked (GlcNAc...) asparagine). The chain crosses the membrane as a helical span at residues 26–49 (LCYALFLAMYLTTLLGNLLIIVLI). At 50–57 (RLDSHLHT) the chain is on the cytoplasmic side. A helical transmembrane segment spans residues 58–79 (PMYLFLSNLSFSDLCFSSVTIP). Residues 80–100 (KLLQNMQNQDPSIPYADCLTQ) are Extracellular-facing. An intrachain disulfide couples C97 to C189. The helical transmembrane segment at 101–120 (MHFFLLFGDLESFLLVAMAY) threads the bilayer. Residues 121–139 (DRYVAICFPLHYTAIMSPM) lie on the Cytoplasmic side of the membrane. Residues 140–158 (LCLSVVALSWVLTTFHAML) form a helical membrane-spanning segment. The Extracellular portion of the chain corresponds to 159–196 (HTLLMARLCFCADNVIPHFFCDMSALLKLACSDTRVNE). The chain crosses the membrane as a helical span at residues 197–219 (WVIFIMGGLIVVIPFLLILGSYA). Residues 220–236 (RIVSSILKVPSFKGICK) are Cytoplasmic-facing. Residues 237–260 (ALSTCGSHLSVVSLFYGTVIGLYL) traverse the membrane as a helical segment. The Extracellular segment spans residues 261–272 (CPSANSSTLKDT). N265 carries N-linked (GlcNAc...) asparagine glycosylation. The helical transmembrane segment at 273–292 (VMAMMYTVVTPMLNPFIYSL) threads the bilayer. Over 293 to 314 (RNRDMKGALERVICKRKNPFLL) the chain is Cytoplasmic.

Belongs to the G-protein coupled receptor 1 family.

It is found in the cell membrane. Odorant receptor. This Pan troglodytes (Chimpanzee) protein is Olfactory receptor 1E2 (OR1E2).